The primary structure comprises 526 residues: MLSYTSCAKLICSRYIVSKISFYSLKRCNSTAVVRTRFAPSPTGFLHLGSLRTALFNYLWAKKSNGKFILRLEDTDQKRKVTGSDLEIYKVLKQFNLQWDEGPIVGGPYGPYEQSSRLQIYQKYAQHLIETGRAYVSYSVPIATTKIDSSTKYHEISIDDLTDAQRKLYKSKKFPYVVRFRMKEPSPFTDLVYGKIAIKSDSREIEESNNFVILKSDGFPTYHFANVVDDHLMHITHVIRGEEWVPSTIKHIQLYEAFGWKPPKFAHLPLLVNPDGSKLSKRQNDAHVSSLLQEGFLPEAILNFIALMGWSSRQKSDFLPMKELIDLFSIDKLTKSSSIVAFEKLYFLNKNYLRRAISDVNRLDELIELVQPRLIQKFSHSSRSHDKSYTKKLLLLLKNKVHTIKEFEKIVFYFYEASDLQQIRSLVSSLITVEELPKILTTILNKFETIEWNTHEIQISLKEIAMEHQMPLKKIQSLLRYGLCGNLPGGGISDTISLLGKETVKSRLERLLLSLKHELPKRSCIV.

The N-terminal 38 residues, 1-38 (MLSYTSCAKLICSRYIVSKISFYSLKRCNSTAVVRTRF), are a transit peptide targeting the mitochondrion. 37-39 (RFA) provides a ligand contact to L-glutamate. Positions 42 to 50 (PTGFLHLGS) match the 'HIGH' region motif. H47 is an ATP binding site. Residues E73, 222 to 226 (YHFAN), and R240 contribute to the L-glutamate site. Residues E243 and 278–282 (KLSKR) each bind ATP. A 'KMSKS' region motif is present at residues 278-282 (KLSKR).

This sequence belongs to the class-I aminoacyl-tRNA synthetase family. Glutamate--tRNA ligase type 1 subfamily.

Its subcellular location is the mitochondrion. It catalyses the reaction tRNA(Glu) + L-glutamate + ATP = L-glutamyl-tRNA(Glu) + AMP + diphosphate. In terms of biological role, catalyzes the attachment of glutamate to tRNA(Glu) in a two-step reaction: glutamate is first activated by ATP to form Glu-AMP and then transferred to the acceptor end of tRNA(Glu). The protein is Glutamate--tRNA ligase, mitochondrial (mse1) of Schizosaccharomyces pombe (strain 972 / ATCC 24843) (Fission yeast).